A 476-amino-acid chain; its full sequence is Doublesex- and mab-3-related transcription factor 3 (476 aa).

A DNA-binding region (DM) is located at residues 29–76 (CARCRNHGVLSWLKGHKRYCRFKDCTCEKCILIIERQRVMAAQVALRR). Disordered regions lie at residues 89–130 (DSLR…RPTA) and 147–195 (GTLP…SKNC). Residues 102–121 (DAAATAATASQSSPASQASQ) are compositionally biased toward low complexity. Residues 165–174 (DSSSTDNTAE) are compositionally biased toward polar residues. The segment covering 176-185 (FSDKDTDQRS) has biased composition (basic and acidic residues). The DMA domain maps to 255 to 290 (RPPLEVLKKIFPNQKPTVLELILKGCGGDLVSAVEV). The span at 418 to 432 (NSTSVFRSSPVLSSR) shows a compositional bias: polar residues. Residues 418–476 (NSTSVFRSSPVLSSRTTEDPRISIPDDGCPIVTKQSIYTEDDYDERSDSSDSRILNTSS) are disordered.

Belongs to the DMRT family. As to expression, expressed in the ventral spinal cord, in a restrical population of neurons migrating ventrically in the developing spinal cord at 11.5 dpc.

It localises to the nucleus. In terms of biological role, probable transcription factor that plays a role in configuring the spinal circuits controlling stride in vertebrates. Involved in neuronal specification within specific subdivision of spinal cord neurons and in the development of a coordinated locomotor network controlling limb movements. May regulate transcription during sexual development. This is Doublesex- and mab-3-related transcription factor 3 (Dmrt3) from Mus musculus (Mouse).